The following is a 314-amino-acid chain: Ribosomal protein L11 methyltransferase (314 aa).

4 residues coordinate S-adenosyl-L-methionine: Thr161, Gly182, Asp204, and Asn248.

It belongs to the methyltransferase superfamily. PrmA family.

Its subcellular location is the cytoplasm. The enzyme catalyses L-lysyl-[protein] + 3 S-adenosyl-L-methionine = N(6),N(6),N(6)-trimethyl-L-lysyl-[protein] + 3 S-adenosyl-L-homocysteine + 3 H(+). Methylates ribosomal protein L11. In Listeria monocytogenes serotype 4b (strain CLIP80459), this protein is Ribosomal protein L11 methyltransferase.